A 475-amino-acid polypeptide reads, in one-letter code: Sulfate adenylyltransferase subunit 1 (475 aa).

A tr-type G domain is found at 25–239; that stretch reads KSLLRFLTCG…EVLETVEIQR (215 aa). Residues 34–41 are G1; the sequence is GSVDDGKS. GTP is bound at residue 34–41; the sequence is GSVDDGKS. The interval 92–96 is G2; the sequence is GITID. Residues 113 to 116 form a G3 region; the sequence is DTPG. GTP-binding positions include 113-117 and 168-171; these read DTPGH and NKMD. Residues 168–171 are G4; sequence NKMD. Residues 206–208 form a G5 region; that stretch reads SAL.

The protein belongs to the TRAFAC class translation factor GTPase superfamily. Classic translation factor GTPase family. CysN/NodQ subfamily. As to quaternary structure, heterodimer composed of CysD, the smaller subunit, and CysN.

The enzyme catalyses sulfate + ATP + H(+) = adenosine 5'-phosphosulfate + diphosphate. It functions in the pathway sulfur metabolism; hydrogen sulfide biosynthesis; sulfite from sulfate: step 1/3. With CysD forms the ATP sulfurylase (ATPS) that catalyzes the adenylation of sulfate producing adenosine 5'-phosphosulfate (APS) and diphosphate, the first enzymatic step in sulfur assimilation pathway. APS synthesis involves the formation of a high-energy phosphoric-sulfuric acid anhydride bond driven by GTP hydrolysis by CysN coupled to ATP hydrolysis by CysD. This is Sulfate adenylyltransferase subunit 1 from Shigella sonnei (strain Ss046).